The chain runs to 2299 residues: Acetyl-CoA carboxylase dmxL1 (2299 aa).

The segment covering 21-39 has biased composition (low complexity); it reads TSIPASVPASAPPSSSAPH. A disordered region spans residues 21 to 41; the sequence is TSIPASVPASAPPSSSAPHAA. The Biotin carboxylation domain maps to 75–583; the sequence is VITNVLIANN…TTGWLDELIT (509 aa). The 198-residue stretch at 227–424 folds into the ATP-grasp 1 domain; the sequence is QVAIDADGIV…LPAAQLQIAM (198 aa). Residue 258 to 315 participates in ATP binding; it reads AKEIGFPVMIKASEGGGGKGIRKCEQEEGFEALYNAASSEIPGSPIFIMKLAGNARHL. Residues Glu-381, Glu-395, and Asn-397 each coordinate Mg(2+). Mn(2+)-binding residues include Glu-381, Glu-395, and Asn-397. The 75-residue stretch at 710-784 folds into the Biotinyl-binding domain; the sequence is LEQENDPTQL…EPGDVLGILT (75 aa). An N6-biotinyllysine modification is found at Lys-751. The segment at 1159 to 1208 is disordered; that stretch reads DMEMSSQLSTPSTPATPPTPPYENGKQSKGVGSISDMSNLIENPDKEPTR. One can recognise a CoA carboxyltransferase N-terminal domain in the interval 1539-1887; it reads PTKALEWLQP…KKNTLVPIGP (349 aa). Residues 1891–2205 form the CoA carboxyltransferase C-terminal domain; that stretch reads PWDRDIVCSP…EEHILKRIAT (315 aa).

The cofactor is biotin. Requires Mg(2+) as cofactor. Mn(2+) is required as a cofactor.

It catalyses the reaction hydrogencarbonate + acetyl-CoA + ATP = malonyl-CoA + ADP + phosphate + H(+). It carries out the reaction N(6)-biotinyl-L-lysyl-[protein] + hydrogencarbonate + ATP = N(6)-carboxybiotinyl-L-lysyl-[protein] + ADP + phosphate + H(+). The protein operates within secondary metabolite biosynthesis. It participates in lipid metabolism; malonyl-CoA biosynthesis; malonyl-CoA from acetyl-CoA: step 1/1. Acetyl-CoA carboxylase; part of the gene cluster that mediates the biosynthesis of the dimeric xanthones cryptosporioptides. The pathway begins with the synthesis of atrochrysone thioester by the polyketide synthase dmx-nrPKS. The atrochrysone carboxyl ACP thioesterase dmxR1 then breaks the thioester bond and releases the atrochrysone carboxylic acid from dmx-nrPKS. Atrochrysone carboxylic acid is decarboxylated by the decarboxylase dmxR15, and oxidized by the anthrone oxygenase dmxR16 to yield emodin. Emodin is then reduced to emodin hydroquinone by the oxidoreductase dmxR7. A-ring reduction by the short chain dehydrogenase dmxR18, dehydration by the scytalone dehydratase-like protein dmxR17 and probable spontaneous re-oxidation, results in overall deoxygenation to chrysophanol. Baeyer-Villiger oxidation by the Baeyer-Villiger monooxygenase (BVMO) dmxR6 then yields monodictylactone in equilibrium with monodictyphenone. In the case of the cryptosporioptides biosynthesis, monodictylactone is reduced at C-12 to an alcohol (by the short chain dehydrogenases dmxR12 or dmxR8) and hydroxylated at C-5 by dmxR9, yielding the electron-rich aromatic which could eliminate H(2)O to form the ortho-quinonemethide, followed by tautomerisation to paraquinone and complete the formal reduction to produce the 10-methylgroup. Conjugate addition of C-4a-OH to the resulting paraquinone by the monooxygenase dmxR10 then gives cyclohexadienone, which is then reduced at C-5 by the short chain dehydrogenase dmxR3 to give the dihydroxanthone. The 6,7-epoxide in the cryptosporioptides could be introduced by the cytochrome P450 monooxygenase dmxL3. The highly reducing PKS dmxL2 manufactures butyrate, which is further carboxylated by dmxL1 to form ethylmalonate. It is not yet clear whether the carboxylation occurs while the butyrate is attached to the ACP of dmxL2, but this unusual fungal metabolite could then be esterified to O-5 by the O-acetyltransferase dmxR13. Finally, dimerization performed by dmxR5 gives the observed dimers cryptosporioptides A, B and C as the final products of the pathway. The sequence is that of Acetyl-CoA carboxylase dmxL1 from Cryptosporiopsis sp. (strain 8999).